Here is a 91-residue protein sequence, read N- to C-terminus: Acylphosphatase (91 aa).

Residues 5-91 (RAHVFVSGRV…EGVDGFEVRW (87 aa)) enclose the Acylphosphatase-like domain. Active-site residues include Arg20 and Asn38.

This sequence belongs to the acylphosphatase family.

It catalyses the reaction an acyl phosphate + H2O = a carboxylate + phosphate + H(+). This is Acylphosphatase (acyP) from Haloarcula marismortui (strain ATCC 43049 / DSM 3752 / JCM 8966 / VKM B-1809) (Halobacterium marismortui).